The sequence spans 243 residues: uncharacterized protein (243 aa).

Positions 120 and 157 each coordinate [4Fe-4S] cluster.

As to quaternary structure, homodimer. Requires [4Fe-4S] cluster as cofactor.

This is an uncharacterized protein from Methanocaldococcus jannaschii (strain ATCC 43067 / DSM 2661 / JAL-1 / JCM 10045 / NBRC 100440) (Methanococcus jannaschii).